A 257-amino-acid chain; its full sequence is tRNA pseudouridine synthase A (257 aa).

Residue D53 is the Nucleophile of the active site. Position 111 (Y111) interacts with substrate.

This sequence belongs to the tRNA pseudouridine synthase TruA family. Homodimer.

It catalyses the reaction uridine(38/39/40) in tRNA = pseudouridine(38/39/40) in tRNA. In terms of biological role, formation of pseudouridine at positions 38, 39 and 40 in the anticodon stem and loop of transfer RNAs. The chain is tRNA pseudouridine synthase A from Xanthomonas euvesicatoria pv. vesicatoria (strain 85-10) (Xanthomonas campestris pv. vesicatoria).